A 553-amino-acid chain; its full sequence is Interleukin-20 receptor subunit alpha (553 aa).

A signal peptide spans 1–29 (MRAPGRPALRPLPLPPLLLLLLAAPWGRA). The Extracellular segment spans residues 30–250 (VPCVSGGLPK…KDQSSEFKAK (221 aa)). 2 consecutive Fibronectin type-III domains span residues 37–135 (LPKP…FLET) and 136–242 (QIGP…TLKD). N-linked (GlcNAc...) asparagine glycans are attached at residues asparagine 42, asparagine 83, asparagine 91, asparagine 182, asparagine 191, and asparagine 200. A disulfide bridge links cysteine 87 with cysteine 95. An intrachain disulfide couples cysteine 215 to cysteine 236. Residues 251 to 271 (IIFWYVLPVSITVFLFSVMGY) traverse the membrane as a helical segment. Residues 272–553 (SIYRYIHVGK…EWGLYVQMEN (282 aa)) are Cytoplasmic-facing. 2 disordered regions span residues 333–353 (SSDV…PPQE) and 462–515 (QEHT…LGEE). Polar residues predominate over residues 334 to 346 (SDVSSLNDPQPSG). The segment covering 499–513 (QDSEGCEPSEGDGLG) has biased composition (acidic residues).

It belongs to the type II cytokine receptor family. In terms of assembly, heterodimer with IL20RB and heterodimer with IL10RB. In terms of tissue distribution, widely expressed with highest levels in skin and testis and high levels in brain. Highly expressed in psoriatic skin.

The protein localises to the membrane. The IL20RA/IL20RB dimer is a receptor for IL19, IL20 and IL24. The IL20RA/IL10RB dimer is a receptor for IL26. This is Interleukin-20 receptor subunit alpha (IL20RA) from Homo sapiens (Human).